Here is a 134-residue protein sequence, read N- to C-terminus: Small ribosomal subunit protein uS11 (134 aa).

Residues 114–134 are disordered; that stretch reads DVTPVPSDSTRRKGGRRGRRL. The segment covering 125 to 134 has biased composition (basic residues); it reads RKGGRRGRRL.

It belongs to the universal ribosomal protein uS11 family.

This is Small ribosomal subunit protein uS11 (RPS14) from Candida albicans (Yeast).